The primary structure comprises 489 residues: L-asparagine permease 1 (489 aa).

The next 12 helical transmembrane spans lie at 25–45 (QLQM…GASG), 49–69 (KAGP…FLIL), 100–120 (AVGW…TTAI), 137–157 (ILAL…VEWF), 162–182 (FWAA…GTVF), 210–230 (WLPL…VELV), 255–275 (IAIF…YTAY), 289–309 (IGFH…ALSS), 344–364 (YGGI…NAFK), 369–389 (FEIV…TIVL), 413–433 (SPYS…TMAS), and 439–459 (TWTV…WYLV).

It belongs to the amino acid-polyamine-organocation (APC) superfamily. Amino acid transporter (AAT) (TC 2.A.3.1) family.

The protein resides in the cell membrane. The chain is L-asparagine permease 1 (ansP1) from Mycobacterium bovis (strain ATCC BAA-935 / AF2122/97).